Here is a 266-residue protein sequence, read N- to C-terminus: Phosphoethanolamine N-methyltransferase (266 aa).

Residue Gln-18 participates in phosphoethanolamine binding. Residue Tyr-19 is part of the active site. Residue Tyr-27 coordinates phosphoethanolamine. S-adenosyl-L-methionine contacts are provided by Ile-36, Ser-37, Gly-63, Asp-85, Ile-86, Asp-110, Ile-111, and Arg-127. His-132 is an active-site residue. Tyr-160, Tyr-175, Arg-179, Tyr-181, and Lys-247 together coordinate phosphoethanolamine.

Belongs to the class I-like SAM-binding methyltransferase superfamily. PEAMT family. Monomer.

The protein resides in the golgi apparatus membrane. Its subcellular location is the cytoplasm. It carries out the reaction phosphoethanolamine + S-adenosyl-L-methionine = N-methylethanolamine phosphate + S-adenosyl-L-homocysteine + H(+). It catalyses the reaction N-methylethanolamine phosphate + S-adenosyl-L-methionine = N,N-dimethylethanolamine phosphate + S-adenosyl-L-homocysteine + H(+). The enzyme catalyses N,N-dimethylethanolamine phosphate + S-adenosyl-L-methionine = phosphocholine + S-adenosyl-L-homocysteine + H(+). It functions in the pathway phospholipid metabolism; phosphatidylcholine biosynthesis; phosphocholine from phosphoethanolamine. With respect to regulation, inhibited by phosphocholine. Inhibited by hexadecylphosphocholine (miltefosine). Inhibited by S-adenosyl-l-homocysteine. Weakly inhibited in vitro by amodiaquine, chloroquine and primaquine. Inhibited by NSC-158011. Catalyzes N-methylation of phosphoethanolamine, phosphomonomethylethanolamine and phosphodimethylethanolamine, the three methylation steps required to convert phosphoethanolamine to phosphocholine. Has no ethanolamine- or phosphatidylethanolamine-N-methyltransferase activity. Required for gametocyte development, maturation and transmission to mosquitoes and for oocyst formation in the mosquito midgut. The polypeptide is Phosphoethanolamine N-methyltransferase (Plasmodium falciparum (isolate 3D7)).